The chain runs to 245 residues: tRNA pseudouridine synthase A (245 aa).

Residue Asp-52 is the Nucleophile of the active site. Tyr-111 is a substrate binding site.

Belongs to the tRNA pseudouridine synthase TruA family. Homodimer.

The catalysed reaction is uridine(38/39/40) in tRNA = pseudouridine(38/39/40) in tRNA. Its function is as follows. Formation of pseudouridine at positions 38, 39 and 40 in the anticodon stem and loop of transfer RNAs. The sequence is that of tRNA pseudouridine synthase A from Rhodospirillum centenum (strain ATCC 51521 / SW).